The chain runs to 524 residues: Sexual development regulator velC (524 aa).

Disordered regions lie at residues 114-195, 322-349, 380-413, and 503-524; these read NRVL…PVHS, PGSG…MSSY, VDEE…HRFR, and GMGK…ARVE. 2 stretches are compositionally biased toward polar residues: residues 131 to 153 and 178 to 195; these read TTGS…ENAG and LDSQ…PVHS. Residues 248-500 enclose the Velvet domain; the sequence is SSSSRYRLFI…ELGFVELKTR (253 aa). Residues 393 to 402 are compositionally biased toward polar residues; the sequence is PSSTDDSTYD.

It belongs to the velvet family. VelC subfamily. In terms of assembly, interacts with vosA.

Its subcellular location is the nucleus. Its function is as follows. Velvet-domain-containing protein that acts as a positive regulator of sexual development. Positively regulates the production of the sexual fruiting bodies called cleistothecia. This is Sexual development regulator velC from Emericella nidulans (strain FGSC A4 / ATCC 38163 / CBS 112.46 / NRRL 194 / M139) (Aspergillus nidulans).